We begin with the raw amino-acid sequence, 601 residues long: 1-deoxy-D-xylulose-5-phosphate synthase (601 aa).

Residues His-63 and 104–106 (GHS) each bind thiamine diphosphate. Asp-135 contacts Mg(2+). Thiamine diphosphate-binding positions include 136-137 (GS), Asn-164, Tyr-272, and Glu-353. Asn-164 is a binding site for Mg(2+).

This sequence belongs to the transketolase family. DXPS subfamily. In terms of assembly, homodimer. Mg(2+) serves as cofactor. It depends on thiamine diphosphate as a cofactor.

The enzyme catalyses D-glyceraldehyde 3-phosphate + pyruvate + H(+) = 1-deoxy-D-xylulose 5-phosphate + CO2. The protein operates within metabolic intermediate biosynthesis; 1-deoxy-D-xylulose 5-phosphate biosynthesis; 1-deoxy-D-xylulose 5-phosphate from D-glyceraldehyde 3-phosphate and pyruvate: step 1/1. Catalyzes the acyloin condensation reaction between C atoms 2 and 3 of pyruvate and glyceraldehyde 3-phosphate to yield 1-deoxy-D-xylulose-5-phosphate (DXP). The sequence is that of 1-deoxy-D-xylulose-5-phosphate synthase from Aliarcobacter butzleri (strain RM4018) (Arcobacter butzleri).